The primary structure comprises 441 residues: Transcription factor TOXE (441 aa).

The basic DNA-binding region stretch occupies residues 14 to 40; the sequence is TDINERRKLQNRVAQRKYRTRQKTRMK. The interval 209 to 243 is disordered; the sequence is FEPNDQRKTENLPREPCGSCPSSSHGYSPTSGNPS. Positions 212-221 are enriched in basic and acidic residues; the sequence is NDQRKTENLP. Over residues 228 to 241 the composition is skewed to polar residues; the sequence is CPSSSHGYSPTSGN. 4 ANK repeats span residues 289–318, 322–351, 355–384, and 413–440; these read DQFS…PLDI, SGKT…EMLA, EGNS…SCRE, and EGMT…SANV.

Belongs to the bZIP family. Monomer.

The protein localises to the nucleus. Its function is as follows. Transcription factor, part of the diffuse TOX2 gene cluster that mediates the biosynthesis of the HC-toxin, cyclic tetrapeptide of structure cyclo(D-Pro-L-Ala-D-Ala-L-Aeo), where Aeo stands for 2-amino-9,10-epoxi-8-oxodecanoic acid. HC-toxin is a determinant of specificity and virulence in the interaction between the producing fungus and its host, maize. TOXE is a pathway-specific transcription factor which coordinates the expression of genes involved in HC-toxin biosynthesis. Binds to the tox-box, a 10-bp motif with the consensus 5'-ATCTCNCGNA-3', which is found in the promoter of all genes involved in HC-toxin biosynthesis. Required for pathogenicity of the fungus on maize. This chain is Transcription factor TOXE, found in Cochliobolus carbonum (Maize leaf spot fungus).